Consider the following 644-residue polypeptide: Karyogamy protein KAR9 (644 aa).

The residue at position 496 (S496) is a Phosphoserine. Disordered regions lie at residues 506–534 (SVPP…PDSF) and 606–644 (PNSQ…TPTY). Basic and acidic residues-rich tracts occupy residues 523-534 (SRGENEKSPDSF) and 634-644 (REGRLDKTPTY).

Its subcellular location is the nucleus. It is found in the cytoplasm. The protein resides in the cytoskeleton. Its function is as follows. Involved in karyogamy. Component of a cortical adaptor complex that orients cytoplasmic microtubules. It may be involved in anchoring cytoplasmic microtubules to the cell cortex. The polypeptide is Karyogamy protein KAR9 (KAR9) (Saccharomyces cerevisiae (strain ATCC 204508 / S288c) (Baker's yeast)).